Consider the following 567-residue polypeptide: Ribulokinase (567 aa).

Belongs to the ribulokinase family.

The catalysed reaction is D-ribulose + ATP = D-ribulose 5-phosphate + ADP + H(+). It carries out the reaction L-ribulose + ATP = L-ribulose 5-phosphate + ADP + H(+). Its pathway is carbohydrate degradation; L-arabinose degradation via L-ribulose; D-xylulose 5-phosphate from L-arabinose (bacterial route): step 2/3. In Vibrio parahaemolyticus serotype O3:K6 (strain RIMD 2210633), this protein is Ribulokinase.